The primary structure comprises 407 residues: Na(+)-translocating NADH-quinone reductase subunit F (407 aa).

The chain crosses the membrane as a helical span at residues 3 to 23; that stretch reads IILGVVMFTLIVLALVLVILF. Residues 32 to 126 enclose the 2Fe-2S ferredoxin-type domain; that stretch reads GDITISVNDD…DMDIELPEEI (95 aa). [2Fe-2S] cluster is bound by residues Cys-69, Cys-75, Cys-78, and Cys-110. The FAD-binding FR-type domain maps to 129–269; sequence VKKWECTVIS…SGPFGEFFAK (141 aa). The catalytic stretch occupies residues 272–389; that stretch reads DAEMVFVGGG…PMMNAAVIGM (118 aa).

The protein belongs to the NqrF family. In terms of assembly, composed of six subunits; NqrA, NqrB, NqrC, NqrD, NqrE and NqrF. [2Fe-2S] cluster serves as cofactor. Requires FAD as cofactor.

It localises to the cell inner membrane. It carries out the reaction a ubiquinone + n Na(+)(in) + NADH + H(+) = a ubiquinol + n Na(+)(out) + NAD(+). In terms of biological role, NQR complex catalyzes the reduction of ubiquinone-1 to ubiquinol by two successive reactions, coupled with the transport of Na(+) ions from the cytoplasm to the periplasm. The first step is catalyzed by NqrF, which accepts electrons from NADH and reduces ubiquinone-1 to ubisemiquinone by a one-electron transfer pathway. This Vibrio campbellii (strain ATCC BAA-1116) protein is Na(+)-translocating NADH-quinone reductase subunit F.